The chain runs to 149 residues: Protein FAM72A (149 aa).

It belongs to the FAM72 family. In terms of assembly, interacts with UNG. In terms of tissue distribution, expressed at high levels in stomach and also in kidney and, at low levels, in heart (at protein level). In the stomach, highly expressed in foveolar cells, parietal cells and chief cells (at protein level). In kidney, expressed in endothelial cells, mesangial and epithelial cells (parietal and visceral epithelium) around glomerulus (at protein level).

It localises to the cytoplasm. It is found in the mitochondrion. May play a role in the regulation of cellular reactive oxygen species metabolism. May participate in cell growth regulation. This chain is Protein FAM72A (Fam72a), found in Rattus norvegicus (Rat).